The chain runs to 365 residues: Chorismate synthase (365 aa).

The NADP(+) site is built by arginine 48 and arginine 54. FMN contacts are provided by residues 129–131 (RSS), 241–242 (NA), glycine 285, 300–304 (KPTSS), and arginine 326.

Belongs to the chorismate synthase family. Homotetramer. FMNH2 serves as cofactor.

The enzyme catalyses 5-O-(1-carboxyvinyl)-3-phosphoshikimate = chorismate + phosphate. It participates in metabolic intermediate biosynthesis; chorismate biosynthesis; chorismate from D-erythrose 4-phosphate and phosphoenolpyruvate: step 7/7. In terms of biological role, catalyzes the anti-1,4-elimination of the C-3 phosphate and the C-6 proR hydrogen from 5-enolpyruvylshikimate-3-phosphate (EPSP) to yield chorismate, which is the branch point compound that serves as the starting substrate for the three terminal pathways of aromatic amino acid biosynthesis. This reaction introduces a second double bond into the aromatic ring system. The sequence is that of Chorismate synthase from Parvibaculum lavamentivorans (strain DS-1 / DSM 13023 / NCIMB 13966).